The primary structure comprises 89 residues: Small ribosomal subunit protein uS15 (89 aa).

Residues 1 to 21 (MVMTAEDKAQVIGEHKKHDGD) are compositionally biased toward basic and acidic residues. The tract at residues 1-24 (MVMTAEDKAQVIGEHKKHDGDTGS) is disordered.

The protein belongs to the universal ribosomal protein uS15 family. As to quaternary structure, part of the 30S ribosomal subunit. Forms a bridge to the 50S subunit in the 70S ribosome, contacting the 23S rRNA.

In terms of biological role, one of the primary rRNA binding proteins, it binds directly to 16S rRNA where it helps nucleate assembly of the platform of the 30S subunit by binding and bridging several RNA helices of the 16S rRNA. Forms an intersubunit bridge (bridge B4) with the 23S rRNA of the 50S subunit in the ribosome. The chain is Small ribosomal subunit protein uS15 from Solidesulfovibrio magneticus (strain ATCC 700980 / DSM 13731 / RS-1) (Desulfovibrio magneticus).